Here is a 341-residue protein sequence, read N- to C-terminus: DnaJ homolog subfamily C member 22 (341 aa).

The 47-residue stretch at 4 to 50 (GLLMTYALWAFGGPVGLHHLYLGRDSHALLWMLTLGGGGLGWLWEFW) folds into the TM2 domain. Helical transmembrane passes span 5-25 (LLMT…HLYL), 30-50 (HALL…WEFW), 81-101 (FASQ…SLSS), 105-125 (FYIV…AAVG), 135-155 (LGAA…ILPI), 185-205 (VGLA…YNTA), and 232-252 (VESV…APGF). The J domain occupies 277 to 341 (LAHQVLGIPE…QPKKPRASWR (65 aa)).

It localises to the membrane. Its function is as follows. May function as a co-chaperone. This Rattus norvegicus (Rat) protein is DnaJ homolog subfamily C member 22 (Dnajc22).